The chain runs to 89 residues: Small ribosomal subunit protein uS15 (89 aa).

The protein belongs to the universal ribosomal protein uS15 family. Part of the 30S ribosomal subunit. Forms a bridge to the 50S subunit in the 70S ribosome, contacting the 23S rRNA.

Its function is as follows. One of the primary rRNA binding proteins, it binds directly to 16S rRNA where it helps nucleate assembly of the platform of the 30S subunit by binding and bridging several RNA helices of the 16S rRNA. In terms of biological role, forms an intersubunit bridge (bridge B4) with the 23S rRNA of the 50S subunit in the ribosome. The polypeptide is Small ribosomal subunit protein uS15 (Brucella abortus (strain S19)).